Here is an 805-residue protein sequence, read N- to C-terminus: Leucine--tRNA ligase (805 aa).

A 'HIGH' region motif is present at residues Pro40–His51. A 'KMSKS' region motif is present at residues Lys576 to Ser580. Lys579 provides a ligand contact to ATP.

This sequence belongs to the class-I aminoacyl-tRNA synthetase family.

The protein resides in the cytoplasm. The catalysed reaction is tRNA(Leu) + L-leucine + ATP = L-leucyl-tRNA(Leu) + AMP + diphosphate. The protein is Leucine--tRNA ligase of Geobacillus thermodenitrificans (strain NG80-2).